A 445-amino-acid chain; its full sequence is Tubulin beta-4B chain (445 aa).

The short motif at 1–4 (MREI) is the MREI motif element. GTP is bound at residue Q11. Position 55 is a phosphothreonine (T55). K58 bears the N6-acetyllysine mark. 5 residues coordinate GTP: E69, S138, G142, T143, and G144. E69 lines the Mg(2+) pocket. S172 is modified (phosphoserine; by CDK1). 2 residues coordinate GTP: N204 and N226. The interval 426-445 (QDATAEEEGEFEEEAEEEVA) is disordered. Over residues 429-445 (TAEEEGEFEEEAEEEVA) the composition is skewed to acidic residues. The residue at position 438 (E438) is a 5-glutamyl polyglutamate.

This sequence belongs to the tubulin family. As to quaternary structure, dimer of alpha and beta chains. A typical microtubule is a hollow water-filled tube with an outer diameter of 25 nm and an inner diameter of 15 nM. Alpha-beta heterodimers associate head-to-tail to form protofilaments running lengthwise along the microtubule wall with the beta-tubulin subunit facing the microtubule plus end conferring a structural polarity. Microtubules usually have 13 protofilaments but different protofilament numbers can be found in some organisms and specialized cells. Component of sperm flagellar doublet microtubules. The cofactor is Mg(2+). Post-translationally, some glutamate residues at the C-terminus are polyglycylated, resulting in polyglycine chains on the gamma-carboxyl group. Glycylation is mainly limited to tubulin incorporated into axonemes (cilia and flagella) whereas glutamylation is prevalent in neuronal cells, centrioles, axonemes, and the mitotic spindle. Both modifications can coexist on the same protein on adjacent residues, and lowering polyglycylation levels increases polyglutamylation, and reciprocally. Cilia and flagella glycylation is required for their stability and maintenance. Flagella glycylation controls sperm motility. In terms of processing, some glutamate residues at the C-terminus are polyglutamylated, resulting in polyglutamate chains on the gamma-carboxyl group. Polyglutamylation plays a key role in microtubule severing by spastin (SPAST). SPAST preferentially recognizes and acts on microtubules decorated with short polyglutamate tails: severing activity by SPAST increases as the number of glutamates per tubulin rises from one to eight, but decreases beyond this glutamylation threshold. Glutamylation is also involved in cilia motility. Phosphorylated on Ser-172 by CDK1 during the cell cycle, from metaphase to telophase, but not in interphase. This phosphorylation inhibits tubulin incorporation into microtubules.

Its subcellular location is the cytoplasm. The protein resides in the cytoskeleton. It is found in the flagellum axoneme. Functionally, tubulin is the major constituent of microtubules, a cylinder consisting of laterally associated linear protofilaments composed of alpha- and beta-tubulin heterodimers. Microtubules grow by the addition of GTP-tubulin dimers to the microtubule end, where a stabilizing cap forms. Below the cap, tubulin dimers are in GDP-bound state, owing to GTPase activity of alpha-tubulin. This chain is Tubulin beta-4B chain (TUBB4B), found in Bos taurus (Bovine).